The sequence spans 39 residues: SPbeta prophage-derived membrane protein YosA (39 aa).

A helical membrane pass occupies residues 19–39; that stretch reads SFVLIVVLFILLIIVGATFLY.

Belongs to the SscA family.

It is found in the membrane. This Bacillus subtilis (strain 168) protein is SPbeta prophage-derived membrane protein YosA (yosA).